Reading from the N-terminus, the 1108-residue chain is Lon protease homolog, mitochondrial (1108 aa).

A mitochondrion-targeting transit peptide spans 1-62 (MLRGQSLPWR…RAFSTSSIRR (62 aa)). Disordered regions lie at residues 24–192 (PLLP…QKPS) and 299–318 (LPPGEQSKAGNTEDKAPEKK). The segment covering 36 to 53 (RSNLSISRLSRSPSLSPR) has biased composition (low complexity). Basic and acidic residues-rich tracts occupy residues 78-103 (EQKDPNEQKDSDRSPEGRRRSPDSTG) and 119-146 (KVAGEKEQRGVEEDAKKENVSIEGKSDP). Over residues 161 to 171 (SDTKSSASNGG) the composition is skewed to polar residues. Basic and acidic residues-rich tracts occupy residues 174-188 (DGGRKGKKGSGDRAL) and 309-318 (NTEDKAPEKK). In terms of domain architecture, Lon N-terminal spans 200-452 (VMAIPIAKRP…KALVVLKKEL (253 aa)). 605–612 (GPPGVGKT) contacts ATP. The span at 821-855 (DKALTDEGKAAQEESKKETEEGDPKDPPADPEKST) shows a compositional bias: basic and acidic residues. The disordered stretch occupies residues 821–862 (DKALTDEGKAAQEESKKETEEGDPKDPPADPEKSTTETPRLA). The Lon proteolytic domain maps to 895–1081 (TFPPGVTMGL…SEVFNILFAE (187 aa)). Residues S987 and K1030 contribute to the active site.

The protein belongs to the peptidase S16 family. In terms of assembly, homohexamer or homoheptamer. Organized in a ring with a central cavity.

The protein resides in the mitochondrion matrix. It catalyses the reaction Hydrolysis of proteins in presence of ATP.. Functionally, ATP-dependent serine protease that mediates the selective degradation of misfolded, unassembled or oxidatively damaged polypeptides as well as certain short-lived regulatory proteins in the mitochondrial matrix. May also have a chaperone function in the assembly of inner membrane protein complexes. Participates in the regulation of mitochondrial gene expression and in the maintenance of the integrity of the mitochondrial genome. Binds to mitochondrial DNA in a site-specific manner. This is Lon protease homolog, mitochondrial (pim1) from Aspergillus fumigatus (strain ATCC MYA-4609 / CBS 101355 / FGSC A1100 / Af293) (Neosartorya fumigata).